The following is a 123-amino-acid chain: Putative hypoxanthine phosphoribosyltransferase (123 aa).

Functionally, may play a role in purine salvage. The sequence is that of Putative hypoxanthine phosphoribosyltransferase from Methanosarcina mazei (strain ATCC BAA-159 / DSM 3647 / Goe1 / Go1 / JCM 11833 / OCM 88) (Methanosarcina frisia).